Consider the following 423-residue polypeptide: D-tagatose-1,6-bisphosphate aldolase subunit GatZ (423 aa).

This sequence belongs to the GatZ/KbaZ family. GatZ subfamily. As to quaternary structure, forms a complex with GatY.

It participates in carbohydrate metabolism; D-tagatose 6-phosphate degradation; D-glyceraldehyde 3-phosphate and glycerone phosphate from D-tagatose 6-phosphate: step 2/2. In terms of biological role, component of the tagatose-1,6-bisphosphate aldolase GatYZ that is required for full activity and stability of the Y subunit. Could have a chaperone-like function for the proper and stable folding of GatY. When expressed alone, GatZ does not show any aldolase activity. Is involved in the catabolism of galactitol. The polypeptide is D-tagatose-1,6-bisphosphate aldolase subunit GatZ (Salmonella heidelberg (strain SL476)).